A 323-amino-acid chain; its full sequence is Ferrochelatase (323 aa).

Residues His196 and Glu277 each coordinate Fe cation.

The protein belongs to the ferrochelatase family.

The protein resides in the cytoplasm. It catalyses the reaction heme b + 2 H(+) = protoporphyrin IX + Fe(2+). It functions in the pathway porphyrin-containing compound metabolism; protoheme biosynthesis; protoheme from protoporphyrin-IX: step 1/1. Functionally, catalyzes the ferrous insertion into protoporphyrin IX. This Haemophilus influenzae (strain PittEE) protein is Ferrochelatase.